The sequence spans 225 residues: Peptidyl-tRNA hydrolase (225 aa).

Residue Tyr-27 coordinates tRNA. Catalysis depends on His-32, which acts as the Proton acceptor. TRNA contacts are provided by Tyr-78, Asn-80, and Asn-126. A disordered region spans residues 198–225 (FNPLDFSGPDRQDQPAPLNPAKTAPGES).

This sequence belongs to the PTH family. Monomer.

It localises to the cytoplasm. It catalyses the reaction an N-acyl-L-alpha-aminoacyl-tRNA + H2O = an N-acyl-L-amino acid + a tRNA + H(+). In terms of biological role, hydrolyzes ribosome-free peptidyl-tRNAs (with 1 or more amino acids incorporated), which drop off the ribosome during protein synthesis, or as a result of ribosome stalling. Its function is as follows. Catalyzes the release of premature peptidyl moieties from peptidyl-tRNA molecules trapped in stalled 50S ribosomal subunits, and thus maintains levels of free tRNAs and 50S ribosomes. The sequence is that of Peptidyl-tRNA hydrolase from Synechococcus sp. (strain JA-3-3Ab) (Cyanobacteria bacterium Yellowstone A-Prime).